The sequence spans 524 residues: RNA-binding protein 39 (524 aa).

The tract at residues 1 to 146 (MADDIDIEAM…PVREPIDNLT (146 aa)) is disordered. Ala-2 is modified (N-acetylalanine). Residues 14–32 (PYKKDENKLSSANGHEERS) show a composition bias toward basic and acidic residues. 2 stretches are compositionally biased toward basic residues: residues 33-56 (KKRK…KERK) and 64-95 (KKSK…RGRY). A Phosphotyrosine modification is found at Tyr-95. Phosphoserine is present on residues Ser-97 and Ser-100. Lys-111 is covalently cross-linked (Glycyl lysine isopeptide (Lys-Gly) (interchain with G-Cter in SUMO2)). Position 117 is a phosphoserine (Ser-117). A Glycyl lysine isopeptide (Lys-Gly) (interchain with G-Cter in SUMO2) cross-link involves residue Lys-119. Basic residues predominate over residues 119–130 (KLSRRRSRSKSP). Phosphoserine is present on residues Ser-121 and Ser-136. Residues 131 to 146 (FRKDKSPVREPIDNLT) show a composition bias toward basic and acidic residues. At Thr-146 the chain carries Phosphothreonine. Residues 153–230 (RTVFCMQLAA…VPIIVQASQA (78 aa)) enclose the RRM 1 domain. Lys-244 is covalently cross-linked (Glycyl lysine isopeptide (Lys-Gly) (interchain with G-Cter in SUMO2)). Residues 250-328 (MRLYVGSLHF…RPMKVGHVTE (79 aa)) form the RRM 2 domain. The segment at 291–355 (KGYGFITFSD…RTGIDLGTTG (65 aa)) is activating domain. The segment at 291-400 (KGYGFITFSD…ADLQTRLSQQ (110 aa)) is interaction with JUN. A phosphoserine mark is found at Ser-334, Ser-337, and Ser-341. Positions 355 to 400 (GRLQLMARLAEGTGLQIPPAAQQALQMSGSLAFGAVADLQTRLSQQ) are interaction with ESR1 and ESR2. The tract at residues 400–524 (QTEASALAAA…ATQLLVPSRR (125 aa)) is interaction with NCOA6. Positions 439-502 (EIKDDVIEEC…KMITAAYVPL (64 aa)) constitute an RRM 3 domain.

It belongs to the splicing factor SR family. In terms of assembly, interacts with NCOA6 and JUN. Interacts with ESR1 and ESR2, in the presence of estradiol (E2). Interacts with RSRC1 (via Arg/Ser-rich domain). Interacts with SF3B1. Interacts with ZNF106 (via N-terminus).

The protein localises to the nucleus speckle. RNA-binding protein that acts as a pre-mRNA splicing factor. Acts by promoting exon inclusion via regulation of exon cassette splicing. Also acts as a transcriptional coactivator for steroid nuclear receptors ESR1/ER-alpha and ESR2/ER-beta, and JUN/AP-1, independently of the pre-mRNA splicing factor activity. The polypeptide is RNA-binding protein 39 (RBM39) (Pongo abelii (Sumatran orangutan)).